The chain runs to 185 residues: Ribosome-recycling factor (185 aa).

It belongs to the RRF family.

Its subcellular location is the cytoplasm. Functionally, responsible for the release of ribosomes from messenger RNA at the termination of protein biosynthesis. May increase the efficiency of translation by recycling ribosomes from one round of translation to another. This chain is Ribosome-recycling factor, found in Coxiella burnetii (strain CbuK_Q154) (Coxiella burnetii (strain Q154)).